Here is a 350-residue protein sequence, read N- to C-terminus: Galactokinase (350 aa).

14–17 (EHTD) serves as a coordination point for substrate. ATP is bound by residues Ser-46 and 98-104 (GSGLSSS). 2 residues coordinate Mg(2+): Ser-104 and Glu-136. Residue Asp-148 is the Proton acceptor of the active site. Tyr-197 lines the substrate pocket.

Belongs to the GHMP kinase family. GalK subfamily.

The protein resides in the cytoplasm. The catalysed reaction is alpha-D-galactose + ATP = alpha-D-galactose 1-phosphate + ADP + H(+). It participates in carbohydrate metabolism; galactose metabolism. Its function is as follows. Catalyzes the transfer of the gamma-phosphate of ATP to D-galactose to form alpha-D-galactose-1-phosphate (Gal-1-P). The polypeptide is Galactokinase (Thermococcus kodakarensis (strain ATCC BAA-918 / JCM 12380 / KOD1) (Pyrococcus kodakaraensis (strain KOD1))).